The sequence spans 100 residues: Urease subunit gamma (100 aa).

The protein belongs to the urease gamma subunit family. Heterotrimer of UreA (gamma), UreB (beta) and UreC (alpha) subunits. Three heterotrimers associate to form the active enzyme.

Its subcellular location is the cytoplasm. It catalyses the reaction urea + 2 H2O + H(+) = hydrogencarbonate + 2 NH4(+). The protein operates within nitrogen metabolism; urea degradation; CO(2) and NH(3) from urea (urease route): step 1/1. This is Urease subunit gamma from Acinetobacter baumannii (strain AB307-0294).